The primary structure comprises 287 residues: Energy-coupling factor transporter ATP-binding protein EcfA2 (287 aa).

Residues 3–245 (IKFENVSYVY…SEWLQKHHLA (243 aa)) enclose the ABC transporter domain. 40-47 (GHTGSGKS) is a binding site for ATP.

This sequence belongs to the ABC transporter superfamily. Energy-coupling factor EcfA family. In terms of assembly, forms a stable energy-coupling factor (ECF) transporter complex composed of 2 membrane-embedded substrate-binding proteins (S component), 2 ATP-binding proteins (A component) and 2 transmembrane proteins (T component).

The protein resides in the cell membrane. ATP-binding (A) component of a common energy-coupling factor (ECF) ABC-transporter complex. Unlike classic ABC transporters this ECF transporter provides the energy necessary to transport a number of different substrates. This chain is Energy-coupling factor transporter ATP-binding protein EcfA2, found in Lactobacillus delbrueckii subsp. bulgaricus (strain ATCC 11842 / DSM 20081 / BCRC 10696 / JCM 1002 / NBRC 13953 / NCIMB 11778 / NCTC 12712 / WDCM 00102 / Lb 14).